A 557-amino-acid polypeptide reads, in one-letter code: High-affinity hexose transporter ght4 (557 aa).

At 1 to 9 (MGRTLTSVL) the chain is on the cytoplasmic side. Residues 10–30 (VVFISMAGWLGGADTGSISGI) traverse the membrane as a helical segment. At 31–58 (LGMRDFQSRFADRYNPITNSYSYSAWRQ) the chain is on the extracellular side. Residues 59 to 79 (ALLTGTVNAGCLFGAMLSSPF) traverse the membrane as a helical segment. Residues 80–87 (TEAIGKKY) lie on the Cytoplasmic side of the membrane. A helical membrane pass occupies residues 88-108 (SIAFFSGCYIIGQILLVTAVP). The Extracellular portion of the chain corresponds to 109-112 (SWVQ). A helical membrane pass occupies residues 113 to 133 (IMVGKLFTGLTIGALSVLSPG). Residues 134-144 (YQSEVAPPQIR) lie on the Cytoplasmic side of the membrane. A helical membrane pass occupies residues 145-165 (GAVVSTYQLFQTCGTLIAACI). Residues 166–179 (NMGTHKLRKTASWR) are Extracellular-facing. Residues 180–200 (TSFGINILWGIFLMVGVLFLP) traverse the membrane as a helical segment. Topologically, residues 201 to 266 (ESPRYLIYKG…VFGKEVRYRT (66 aa)) are cytoplasmic. The helical transmembrane segment at 267-285 (VLGFLTMLLRELIGNNYYF) threads the bilayer. Topologically, residues 286–301 (YYATQVFKGTGMTDIF) are extracellular. Residues 302–322 (LPAVILGAINFGTTFGALYTI) form a helical membrane-spanning segment. The Cytoplasmic portion of the chain corresponds to 323–328 (DNLGRR). Residues 329–349 (NPLIFGAAFQSICFFIYAAVG) form a helical membrane-spanning segment. Over 350–363 (DRKLIYKNGTSDHR) the chain is Extracellular. Asn357 is a glycosylation site (N-linked (GlcNAc...) asparagine). Residues 364 to 384 (AGAVMIVFSCLFLFSYCCSWG) form a helical membrane-spanning segment. At 385 to 404 (PMGWVIVGETFPIRYRSKCA) the chain is on the cytoplasmic side. The chain crosses the membrane as a helical span at residues 405–425 (AVATSGNWLGNFMVSFFTPFI). At 426 to 432 (SNSIGFK) the chain is on the extracellular side. Residues 433 to 453 (LGYIYACINMTSAFQIFLMAK) traverse the membrane as a helical segment. Residues 454 to 557 (ETKGLTLEEV…VSEESHPTWV (104 aa)) lie on the Cytoplasmic side of the membrane. Over residues 492-514 (KEEEKREREKSKGYRGQEERFIE) the composition is skewed to basic and acidic residues. The disordered stretch occupies residues 492–557 (KEEEKREREK…VSEESHPTWV (66 aa)). Residues 524–536 (SSASSESFASAGA) show a composition bias toward low complexity. Residues 547 to 557 (NVSEESHPTWV) show a composition bias toward basic and acidic residues.

This sequence belongs to the major facilitator superfamily. Sugar transporter (TC 2.A.1.1) family.

Its subcellular location is the membrane. The polypeptide is High-affinity hexose transporter ght4 (ght4) (Schizosaccharomyces pombe (strain 972 / ATCC 24843) (Fission yeast)).